The following is a 164-amino-acid chain: Large ribosomal subunit protein uL23 (164 aa).

The tract at residues 1 to 41 is disordered; the sequence is MPAKAASAAASKKNSAPKSAVSKKVAKKGAPAAAAKPTKVV.

This sequence belongs to the universal ribosomal protein uL23 family.

Its function is as follows. This protein binds to a specific region on the 26S rRNA. This is Large ribosomal subunit protein uL23 (RPL23A) from Trypanosoma brucei brucei.